Reading from the N-terminus, the 992-residue chain is Probable translation initiation factor IF-2 (992 aa).

Positions 96–220 (KNWHGVTVTP…LSLALLRFGI (125 aa)) constitute a DOD-type homing endonuclease domain. In terms of domain architecture, tr-type G spans 399-616 (TTETHNFIAN…LIAGLSQRYL (218 aa)). Residues 472-476 (DTPGH) and 526-529 (NKID) each bind GTP.

This sequence belongs to the TRAFAC class translation factor GTPase superfamily. Classic translation factor GTPase family. IF-2 subfamily. This protein undergoes a protein self splicing that involves a post-translational excision of the intervening region (intein) followed by peptide ligation.

Its function is as follows. Function in general translation initiation by promoting the binding of the formylmethionine-tRNA to ribosomes. Seems to function along with eIF-2. The sequence is that of Probable translation initiation factor IF-2 (infB) from Pyrococcus abyssi (strain GE5 / Orsay).